The chain runs to 131 residues: Profilin-4 (131 aa).

The protein belongs to the profilin family. Occurs in many kinds of cells as a complex with monomeric actin in a 1:1 ratio.

Its subcellular location is the cytoplasm. The protein localises to the cytoskeleton. Functionally, binds to actin and affects the structure of the cytoskeleton. At high concentrations, profilin prevents the polymerization of actin, whereas it enhances it at low concentrations. By binding to PIP2, it inhibits the formation of IP3 and DG. The polypeptide is Profilin-4 (Hevea brasiliensis (Para rubber tree)).